The following is a 322-amino-acid chain: Undecaprenyl-phosphate 4-deoxy-4-formamido-L-arabinose transferase (322 aa).

Over 1–235 (MFEIHPVKKV…TCLTTTPLRM (235 aa)) the chain is Cytoplasmic. The helical transmembrane segment at 236–256 (LSLLGSIIAIGGFSIAVLLVI) threads the bilayer. At 257–269 (LRLTFGPQWAAEG) the chain is on the periplasmic side. Residues 270 to 290 (VFMLFAVLFTFIGAQFIGMGL) form a helical membrane-spanning segment. Over 291-322 (LGEYIGRIYTDVRARPRYFVQQVIRPSSKENE) the chain is Cytoplasmic.

Belongs to the glycosyltransferase 2 family.

It is found in the cell inner membrane. It catalyses the reaction UDP-4-deoxy-4-formamido-beta-L-arabinose + di-trans,octa-cis-undecaprenyl phosphate = 4-deoxy-4-formamido-alpha-L-arabinopyranosyl di-trans,octa-cis-undecaprenyl phosphate + UDP. It participates in glycolipid biosynthesis; 4-amino-4-deoxy-alpha-L-arabinose undecaprenyl phosphate biosynthesis; 4-amino-4-deoxy-alpha-L-arabinose undecaprenyl phosphate from UDP-4-deoxy-4-formamido-beta-L-arabinose and undecaprenyl phosphate: step 1/2. The protein operates within bacterial outer membrane biogenesis; lipopolysaccharide biosynthesis. In terms of biological role, catalyzes the transfer of 4-deoxy-4-formamido-L-arabinose from UDP to undecaprenyl phosphate. The modified arabinose is attached to lipid A and is required for resistance to polymyxin and cationic antimicrobial peptides. This chain is Undecaprenyl-phosphate 4-deoxy-4-formamido-L-arabinose transferase, found in Shigella sonnei (strain Ss046).